A 130-amino-acid polypeptide reads, in one-letter code: DNA-directed RNA polymerase subunit omega (130 aa).

The segment at 109 to 130 (EEELLKGLEGLAPPEEQPEEDE) is disordered.

It belongs to the RNA polymerase subunit omega family. As to quaternary structure, the RNAP catalytic core consists of 2 alpha, 1 beta, 1 beta' and 1 omega subunit. When a sigma factor is associated with the core the holoenzyme is formed, which can initiate transcription.

It catalyses the reaction RNA(n) + a ribonucleoside 5'-triphosphate = RNA(n+1) + diphosphate. Its function is as follows. Promotes RNA polymerase assembly. Latches the N- and C-terminal regions of the beta' subunit thereby facilitating its interaction with the beta and alpha subunits. The chain is DNA-directed RNA polymerase subunit omega from Rhodopseudomonas palustris (strain BisA53).